Reading from the N-terminus, the 324-residue chain is Glyoxylate/hydroxypyruvate reductase B (324 aa).

Active-site residues include Arg-237 and Glu-266. His-285 functions as the Proton donor in the catalytic mechanism.

Belongs to the D-isomer specific 2-hydroxyacid dehydrogenase family. GhrB subfamily. As to quaternary structure, homodimer.

The protein resides in the cytoplasm. It carries out the reaction glycolate + NADP(+) = glyoxylate + NADPH + H(+). The catalysed reaction is (R)-glycerate + NAD(+) = 3-hydroxypyruvate + NADH + H(+). The enzyme catalyses (R)-glycerate + NADP(+) = 3-hydroxypyruvate + NADPH + H(+). Functionally, catalyzes the NADPH-dependent reduction of glyoxylate and hydroxypyruvate into glycolate and glycerate, respectively. The protein is Glyoxylate/hydroxypyruvate reductase B of Citrobacter koseri (strain ATCC BAA-895 / CDC 4225-83 / SGSC4696).